We begin with the raw amino-acid sequence, 326 residues long: tRNA-modifying protein YgfZ (326 aa).

Folate is bound by residues Trp-27 and Trp-189.

This sequence belongs to the tRNA-modifying YgfZ family.

The protein resides in the cytoplasm. Folate-binding protein involved in regulating the level of ATP-DnaA and in the modification of some tRNAs. It is probably a key factor in regulatory networks that act via tRNA modification, such as initiation of chromosomal replication. The polypeptide is tRNA-modifying protein YgfZ (Escherichia fergusonii (strain ATCC 35469 / DSM 13698 / CCUG 18766 / IAM 14443 / JCM 21226 / LMG 7866 / NBRC 102419 / NCTC 12128 / CDC 0568-73)).